A 539-amino-acid polypeptide reads, in one-letter code: Membrane protein insertase YidC (539 aa).

The chain crosses the membrane as a helical span at residues 6–26 (NILLIALALVSFLLFQQWNVA). Over residues 35 to 44 (EQAQSGSTLP) the composition is skewed to polar residues. The segment at 35 to 55 (EQAQSGSTLPAPSYADDLDPA) is disordered. 4 helical membrane-spanning segments follow: residues 341-361 (SFIQ…TFIV), 416-436 (LGGC…YWAL), 454-474 (LSAQ…MFLI), and 495-515 (PVMF…YWLV).

Belongs to the OXA1/ALB3/YidC family. Type 1 subfamily. As to quaternary structure, interacts with the Sec translocase complex via SecD. Specifically interacts with transmembrane segments of nascent integral membrane proteins during membrane integration.

The protein localises to the cell inner membrane. Required for the insertion and/or proper folding and/or complex formation of integral membrane proteins into the membrane. Involved in integration of membrane proteins that insert both dependently and independently of the Sec translocase complex, as well as at least some lipoproteins. Aids folding of multispanning membrane proteins. The protein is Membrane protein insertase YidC of Vibrio atlanticus (strain LGP32) (Vibrio splendidus (strain Mel32)).